The following is a 182-amino-acid chain: ATP-dependent protease subunit HslV (182 aa).

Threonine 10 is a catalytic residue. Positions 166, 169, and 172 each coordinate Na(+).

The protein belongs to the peptidase T1B family. HslV subfamily. In terms of assembly, a double ring-shaped homohexamer of HslV is capped on each side by a ring-shaped HslU homohexamer. The assembly of the HslU/HslV complex is dependent on binding of ATP.

It localises to the cytoplasm. The catalysed reaction is ATP-dependent cleavage of peptide bonds with broad specificity.. Its activity is regulated as follows. Allosterically activated by HslU binding. Protease subunit of a proteasome-like degradation complex believed to be a general protein degrading machinery. This chain is ATP-dependent protease subunit HslV, found in Rickettsia africae (strain ESF-5).